The sequence spans 75 residues: Pro-glucagon (75 aa).

This sequence belongs to the glucagon family.

Its subcellular location is the secreted. In terms of biological role, plays a key role in glucose metabolism and homeostasis. Regulates blood glucose by increasing gluconeogenesis and decreasing glycolysis. This chain is Pro-glucagon (gcg), found in Amia calva (Bowfin).